The sequence spans 224 residues: Small ribosomal subunit protein uS7 (224 aa).

The protein belongs to the universal ribosomal protein uS7 family. Part of the 30S ribosomal subunit.

In terms of biological role, one of the primary rRNA binding proteins, it binds directly to 16S rRNA where it nucleates assembly of the head domain of the 30S subunit. Is located at the subunit interface close to the decoding center. The chain is Small ribosomal subunit protein uS7 from Caldivirga maquilingensis (strain ATCC 700844 / DSM 13496 / JCM 10307 / IC-167).